The primary structure comprises 407 residues: Argininosuccinate synthase (407 aa).

10–18 provides a ligand contact to ATP; sequence AYSGGLDTS. Residues Tyr88 and Ser93 each coordinate L-citrulline. Residue Gly118 coordinates ATP. L-aspartate contacts are provided by Thr120, Asn124, and Asp125. Asn124 contacts L-citrulline. 5 residues coordinate L-citrulline: Arg128, Ser177, Ser186, Glu263, and Tyr275.

This sequence belongs to the argininosuccinate synthase family. Type 1 subfamily. Homotetramer.

The protein resides in the cytoplasm. It catalyses the reaction L-citrulline + L-aspartate + ATP = 2-(N(omega)-L-arginino)succinate + AMP + diphosphate + H(+). It participates in amino-acid biosynthesis; L-arginine biosynthesis; L-arginine from L-ornithine and carbamoyl phosphate: step 2/3. The protein is Argininosuccinate synthase of Clostridium botulinum (strain Alaska E43 / Type E3).